A 291-amino-acid polypeptide reads, in one-letter code: Phosphatidylglycerol--prolipoprotein diacylglyceryl transferase (291 aa).

The next 4 helical transmembrane spans lie at tryptophan 24–leucine 44, phenylalanine 64–tyrosine 84, isoleucine 99–leucine 119, and glycine 125–leucine 145. Arginine 147 lines the a 1,2-diacyl-sn-glycero-3-phospho-(1'-sn-glycerol) pocket. Transmembrane regions (helical) follow at residues alanine 187–leucine 207, glycine 211–phenylalanine 231, and methionine 247–tryptophan 267.

The protein belongs to the Lgt family.

It localises to the cell inner membrane. It carries out the reaction L-cysteinyl-[prolipoprotein] + a 1,2-diacyl-sn-glycero-3-phospho-(1'-sn-glycerol) = an S-1,2-diacyl-sn-glyceryl-L-cysteinyl-[prolipoprotein] + sn-glycerol 1-phosphate + H(+). It participates in protein modification; lipoprotein biosynthesis (diacylglyceryl transfer). Its function is as follows. Catalyzes the transfer of the diacylglyceryl group from phosphatidylglycerol to the sulfhydryl group of the N-terminal cysteine of a prolipoprotein, the first step in the formation of mature lipoproteins. This is Phosphatidylglycerol--prolipoprotein diacylglyceryl transferase from Nitrobacter hamburgensis (strain DSM 10229 / NCIMB 13809 / X14).